We begin with the raw amino-acid sequence, 301 residues long: Ribosomal protein L11 methyltransferase (301 aa).

S-adenosyl-L-methionine contacts are provided by Thr-152, Gly-173, Asp-195, and Asn-236.

Belongs to the methyltransferase superfamily. PrmA family.

Its subcellular location is the cytoplasm. The catalysed reaction is L-lysyl-[protein] + 3 S-adenosyl-L-methionine = N(6),N(6),N(6)-trimethyl-L-lysyl-[protein] + 3 S-adenosyl-L-homocysteine + 3 H(+). In terms of biological role, methylates ribosomal protein L11. This chain is Ribosomal protein L11 methyltransferase, found in Dictyoglomus thermophilum (strain ATCC 35947 / DSM 3960 / H-6-12).